A 247-amino-acid chain; its full sequence is UPF0259 membrane protein BUAPTUC7_273 (247 aa).

6 helical membrane-spanning segments follow: residues 20–40 (IGAIFFISIFATFMNILIDMF), 85–105 (IMESLISKTTLLGSIIILISF), 114–134 (IVSSIRTFFLFFPSLFILNFL), 137–157 (FIIQIGFMLLIIPGILLSIIL), 188–208 (IIGPGVLFWMCGKFILTMLLA), and 218–238 (LFLISNISMNILFSILIIYLF).

It belongs to the UPF0259 family.

Its subcellular location is the cell membrane. This chain is UPF0259 membrane protein BUAPTUC7_273, found in Buchnera aphidicola subsp. Acyrthosiphon pisum (strain Tuc7).